The primary structure comprises 215 residues: S-crystallin 4 (215 aa).

The 79-residue stretch at 2 to 80 folds into the GST N-terminal domain; sequence PSYTLHYFNH…YLAREFGFHG (79 aa). Residues 82–215 enclose the GST C-terminal domain; that stretch reads NNMDMARVDY…YLQKRSRTEF (134 aa).

Belongs to the GST superfamily. In terms of tissue distribution, lens.

S-crystallins are structural components of squids and octopi eye lens. Contains relatively little if any GST activity. This Enteroctopus dofleini (North Pacific giant octopus) protein is S-crystallin 4.